The chain runs to 856 residues: Inactive rhomboid protein 1 (856 aa).

Residues 1-21 (MGEARRDSSSSLQHKKPPWLK) are disordered. Over 1–412 (MGEARRDSSS…HRPFFTYWLT (412 aa)) the chain is Cytoplasmic. 2 positions are modified to phosphoserine: Ser-76 and Ser-176. A phosphothreonine mark is found at Thr-180 and Thr-183. Ser-391 carries the phosphoserine modification. Residues 413–433 (FVHSLVTILAVCIYGVAPVGF) traverse the membrane as a helical segment. Residues 434–656 (SQHETVDSVL…NPEVPDQFYR (223 aa)) lie on the Lumenal side of the membrane. N-linked (GlcNAc...) asparagine glycosylation is present at Asn-584. Residues 657–677 (LWLSLFLHAGVLHCLVSVCFQ) form a helical membrane-spanning segment. The Cytoplasmic segment spans residues 678–692 (MTVLRDLEKLAGWHR). The chain crosses the membrane as a helical span at residues 693–713 (IAIIYLLSGVTGNLASAIFLP). Residues 714–715 (YR) lie on the Lumenal side of the membrane. Residues 716-736 (AEVGPAGSQFGILACLFVELF) traverse the membrane as a helical segment. At 737–747 (QSWQILARPWR) the chain is on the cytoplasmic side. The chain crosses the membrane as a helical span at residues 748–768 (AFFKLLAVVLFLFTFGLLPWI). Topologically, residues 769–773 (DNFAH) are lumenal. The helical transmembrane segment at 774 to 794 (ISGFISGLFLSFAFLPYISFG) threads the bilayer. Topologically, residues 795–804 (KFDLYRKRCQ) are cytoplasmic. Residues 805–825 (IIVFQLVFLGLLAGLVVLFYF) traverse the membrane as a helical segment. Residues 826-856 (YPVRCEWCEFLTCIPFTDKFCEKYELDAQLH) lie on the Lumenal side of the membrane.

Belongs to the peptidase S54 family. Homodimer, or homooligomer. Interacts with TGFA and HBEGF. Interacts with EGF; may retain EGF in the endoplasmic reticulum and regulates its degradation through the endoplasmic reticulum-associated degradation (ERAD). Interacts (via cytoplasmic N-terminus) with FRMD8/iTAP; this interaction leads to mutual protein stabilization. Interacts with ADAM17/TACE.

The protein localises to the endoplasmic reticulum membrane. It localises to the golgi apparatus membrane. Functionally, regulates ADAM17 protease, a sheddase of the epidermal growth factor (EGF) receptor ligands and TNF, thereby plays a role in sleep, cell survival, proliferation, migration and inflammation. Does not exhibit any protease activity on its own. This is Inactive rhomboid protein 1 (RHBDF1) from Bos taurus (Bovine).